A 371-amino-acid chain; its full sequence is Cytochrome b (371 aa).

4 helical membrane passes run 25–45 (FGSM…FLAV), 69–90 (WMMQ…YIHI), 105–125 (WMSG…GYVL), and 170–190 (FFAL…LHII). Residues His75 and His89 each contribute to the heme b site. Residues His174 and His188 each coordinate heme b. Residue His193 coordinates a ubiquinone. Transmembrane regions (helical) follow at residues 218 to 238 (HKDL…MSFF), 280 to 300 (LGGA…PFTH), 312 to 332 (LSQL…WAAT), and 339 to 358 (FIII…LSFP).

This sequence belongs to the cytochrome b family. The cytochrome bc1 complex contains 3 respiratory subunits (MT-CYB, CYC1 and UQCRFS1), 2 core proteins (UQCRC1 and UQCRC2) and probably 6 low-molecular weight proteins. Heme b serves as cofactor.

The protein localises to the mitochondrion inner membrane. Component of the ubiquinol-cytochrome c reductase complex (complex III or cytochrome b-c1 complex) that is part of the mitochondrial respiratory chain. The b-c1 complex mediates electron transfer from ubiquinol to cytochrome c. Contributes to the generation of a proton gradient across the mitochondrial membrane that is then used for ATP synthesis. The polypeptide is Cytochrome b (MT-CYB) (Apodora papuana (Papuan olive python)).